Reading from the N-terminus, the 149-residue chain is MHCPFCSATDTKVIDSRLVADGHQVRRRRECAECHERFTTFEGAELVMPRVVKQDGSRQPFDEEKLRGGMLRAVEKRPVSMDQIEQALTKIKSTLRGTGEREIKSEMIGNLMMEQLVNLDKVAYIRFASVYRAFEDVSEFGDAIAKLQK.

A zinc finger lies at 3–34 (CPFCSATDTKVIDSRLVADGHQVRRRRECAEC). Residues 49 to 139 (PRVVKQDGSR…VYRAFEDVSE (91 aa)) form the ATP-cone domain.

Belongs to the NrdR family. The cofactor is Zn(2+).

Negatively regulates transcription of bacterial ribonucleotide reductase nrd genes and operons by binding to NrdR-boxes. The protein is Transcriptional repressor NrdR of Shewanella woodyi (strain ATCC 51908 / MS32).